The primary structure comprises 92 residues: Small ribosomal subunit protein bS20 (92 aa).

Positions 1–28 (MANTASAEKRNRQAQKRRARNVQVRTGV) are disordered.

It belongs to the bacterial ribosomal protein bS20 family.

Binds directly to 16S ribosomal RNA. The chain is Small ribosomal subunit protein bS20 from Anaeromyxobacter dehalogenans (strain 2CP-C).